Consider the following 383-residue polypeptide: Plant intracellular Ras-group-related LRR protein 8 (383 aa).

10 LRR repeats span residues 56 to 79 (RQNIKTLDLSGMSLASLSASSINL), 80 to 102 (ASISKLDLSNNNIQKIPESLVAR), 104 to 126 (LNLWALDLQSNQLKTLPNSIGCL), 127 to 149 (SKLKFLNVSGNYLQSLPKTIEDC), 151 to 173 (SLEELNANFNELTRLPDAIGFEL), 174 to 197 (TNLTKLSVNSNKLVLLPNSVSYLT), 199 to 219 (LRVLDARLNRLSSLPEDLENL), 221 to 244 (NLQVLNVSQNFQHLTTLPYSVGLL), 245 to 268 (ISLVELDVSYNGITVLPDSLGCLR), and 270 to 290 (IQKLSVEGNPLISPPFEVVEQ). The short motif at 291–298 (GLEALKQY) is the GVYW; degenerate element.

Belongs to the SHOC2 family. In terms of tissue distribution, widely expressed except flowers.

In terms of biological role, leucine-rich repeat protein that likely mediates protein interactions, possibly in the context of signal transduction. In Arabidopsis thaliana (Mouse-ear cress), this protein is Plant intracellular Ras-group-related LRR protein 8 (PIRL8).